The primary structure comprises 481 residues: Drebrin-like protein (481 aa).

The ADF-H domain occupies Ser-3–Asn-131. Positions Tyr-217 to Lys-227 are enriched in basic and acidic residues. A disordered region spans residues Tyr-217–Gly-423. Positions Gln-228–Ala-237 are enriched in low complexity. A compositionally biased stretch (polar residues) spans Thr-248–Thr-261. Residues Pro-291–Pro-300 show a composition bias toward pro residues. Residues Gln-325 to Gln-335 are compositionally biased toward acidic residues. Low complexity predominate over residues Gln-336–Gln-413. In terms of domain architecture, SH3 spans Ser-422–Leu-481.

It belongs to the ABP1 family.

It localises to the cytoplasm. The protein resides in the cytoskeleton. It is found in the cell projection. Its subcellular location is the pseudopodium. In terms of biological role, actin-binding adapter protein. Binds to F-actin but is not involved in actin polymerization, capping or bundling. Does not bind G-actin. Controls pseudopodium number and motility in early stages of chemotactic aggregation. In Dictyostelium discoideum (Social amoeba), this protein is Drebrin-like protein (abpE-1).